The chain runs to 216 residues: HTH-type transcriptional regulator EthR (216 aa).

Residues 1–10 (MTTSAASQAS) show a composition bias toward polar residues. Residues 1-24 (MTTSAASQASLPRGRRTARPSGDD) are disordered. An HTH tetR-type domain is found at 23–83 (DDRELAILAT…TLLDRVVNQA (61 aa)). Residues 46 to 65 (SVDDLAKGAGISRPTFYFYF) constitute a DNA-binding region (H-T-H motif).

In terms of assembly, homodimer.

In terms of biological role, involved in the repression of the monooxygenase EthA which is responsible of the formation of the active metabolite of ethionamide (ETH). The chain is HTH-type transcriptional regulator EthR (ethR) from Mycobacterium bovis (strain ATCC BAA-935 / AF2122/97).